The primary structure comprises 490 residues: Aspartyl/glutamyl-tRNA(Asn/Gln) amidotransferase subunit B (490 aa).

This sequence belongs to the GatB/GatE family. GatB subfamily. Heterotrimer of A, B and C subunits.

It carries out the reaction L-glutamyl-tRNA(Gln) + L-glutamine + ATP + H2O = L-glutaminyl-tRNA(Gln) + L-glutamate + ADP + phosphate + H(+). It catalyses the reaction L-aspartyl-tRNA(Asn) + L-glutamine + ATP + H2O = L-asparaginyl-tRNA(Asn) + L-glutamate + ADP + phosphate + 2 H(+). In terms of biological role, allows the formation of correctly charged Asn-tRNA(Asn) or Gln-tRNA(Gln) through the transamidation of misacylated Asp-tRNA(Asn) or Glu-tRNA(Gln) in organisms which lack either or both of asparaginyl-tRNA or glutaminyl-tRNA synthetases. The reaction takes place in the presence of glutamine and ATP through an activated phospho-Asp-tRNA(Asn) or phospho-Glu-tRNA(Gln). This is Aspartyl/glutamyl-tRNA(Asn/Gln) amidotransferase subunit B from Methylorubrum populi (strain ATCC BAA-705 / NCIMB 13946 / BJ001) (Methylobacterium populi).